The chain runs to 650 residues: Protein KINESIN LIGHT CHAIN-RELATED 3 (650 aa).

The segment at 104–141 (EKQTGKKNVTKSNVGVGGMRKKKVGGTKLQNGNEEPSS) is disordered. The segment covering 131-141 (KLQNGNEEPSS) has biased composition (polar residues). 10 TPR repeats span residues 192-225 (IMCL…PVVE), 235-268 (FAGL…QKKV), 277-310 (GETC…HRES), 319-353 (AADR…AANG), 359-392 (AFVD…LKTA), 401-434 (GSVY…YESH), 444-477 (ASGL…YADS), 485-518 (AGIE…LRAT), 527-560 (GIAL…LEQE), and 569-602 (LGLY…REEK).

The protein belongs to the kinesin light chain family.

The protein is Protein KINESIN LIGHT CHAIN-RELATED 3 of Arabidopsis thaliana (Mouse-ear cress).